The chain runs to 273 residues: Large ribosomal subunit protein uL2cz/uL2cy (273 aa).

2 disordered regions span residues 1 to 20 (MAIH…AVDS) and 224 to 254 (NPVD…PALG).

This sequence belongs to the universal ribosomal protein uL2 family. As to quaternary structure, part of the 50S ribosomal subunit.

Its subcellular location is the plastid. The protein resides in the chloroplast. The protein is Large ribosomal subunit protein uL2cz/uL2cy (rpl2-A) of Nuphar advena (Common spatterdock).